A 154-amino-acid polypeptide reads, in one-letter code: Myoglobin (154 aa).

In terms of domain architecture, Globin spans 2-148 (GLSDGEWQLV…FRKDMASNYK (147 aa)). Phosphoserine is present on S4. Residue H65 coordinates nitrite. H65 is a binding site for O2. T68 is modified (phosphothreonine). Residue H94 participates in heme b binding.

It belongs to the globin family. In terms of assembly, monomeric.

It is found in the cytoplasm. The protein localises to the sarcoplasm. It carries out the reaction Fe(III)-heme b-[protein] + nitric oxide + H2O = Fe(II)-heme b-[protein] + nitrite + 2 H(+). The catalysed reaction is H2O2 + AH2 = A + 2 H2O. In terms of biological role, monomeric heme protein which primary function is to store oxygen and facilitate its diffusion within muscle tissues. Reversibly binds oxygen through a pentacoordinated heme iron and enables its timely and efficient release as needed during periods of heightened demand. Depending on the oxidative conditions of tissues and cells, and in addition to its ability to bind oxygen, it also has a nitrite reductase activity whereby it regulates the production of bioactive nitric oxide. Under stress conditions, like hypoxia and anoxia, it also protects cells against reactive oxygen species thanks to its pseudoperoxidase activity. The protein is Myoglobin of Homo sapiens (Human).